Consider the following 544-residue polypeptide: Protein adenylyltransferase (544 aa).

Positions 63 to 216 (FDTAYLCHIH…LEPMQHLFED (154 aa)) constitute a Fido domain. ATP is bound by residues 93 to 94 (FA), 106 to 107 (RT), 163 to 167 (EGNGR), and arginine 170.

The protein localises to the secreted. The enzyme catalyses L-tyrosyl-[protein] + ATP = O-(5'-adenylyl)-L-tyrosyl-[protein] + diphosphate. The catalysed reaction is L-threonyl-[protein] + ATP = 3-O-(5'-adenylyl)-L-threonyl-[protein] + diphosphate. In terms of biological role, adenylyltransferase involved in virulence by mediating the addition of adenosine 5'-monophosphate (AMP) to specific residue of host target proteins. The protein is Protein adenylyltransferase (bepA) of Bartonella henselae (strain ATCC 49882 / DSM 28221 / CCUG 30454 / Houston 1) (Rochalimaea henselae).